A 231-amino-acid chain; its full sequence is MYLMPPLIPAVLIRRYQRFLADFQLENGEIVTAHCPNSGSMKGCAVPGSPAFISRCDKPGRKLCYTWEQVKADNCWIGINTSLPNRLVHNAIESNVIKELQGYHSIRPEVRYGINSRIDLLLSRGDELCYVEVKNVTLMEDGRALFPDAATVRGQKHLRELMEMVRLGHRAVNFFVVQRPDCSSVSPADAIDPEYGRLLRLAAANGVELLAYQAQVSRETIHLTHRLPVIL.

Belongs to the SfsA family.

This is Sugar fermentation stimulation protein homolog from Geotalea daltonii (strain DSM 22248 / JCM 15807 / FRC-32) (Geobacter daltonii).